Reading from the N-terminus, the 417-residue chain is FISKMGYPKQTQVQVLPESGETPLFKQFFKNWRDKEATDGMGVAYVPNHIAKIENVPFDVTVLHESPAMAAQHGMVDDGSGKKQIWRIENCEKVPVLESHYGQFYGGDSYIILYHYKSGGKQGQIIYTWQGDDSTKDEITASAILSAQLDEELGGGPVQVRVVQGKEPAHLISLFGGKPMIIYKGGTSREGGQTKDANVRLFQVRTSSSGFSRAVEVDNTASNLNSNDAFVLTTPSASYLWVGQGSTNVEKNGAKELLKILGVSASEIPEGQETDDFWGALGGKADYRTSARLKDKLNAHPPRLFACSNKTGRFIIEEVPGEISQDDLATDDVMLLDTWDQVYVWVGNEAQEDEKKEAIASAYKYIESDPANRDKRTPVAITKQGFEPPTFIGWFLGWEADYWDVDPLERAMAGLSS.

The Gelsolin-like 4 repeat unit spans residues 93-171 (KVPVLESHYG…VVQGKEPAHL (79 aa)). Positions 107, 108, 138, 150, 155, 157, 187, 227, 228, 250, 331, 332, and 354 each coordinate Ca(2+). Gelsolin-like repeat units lie at residues 213–261 (RAVE…LKIL) and 316–392 (IEEV…PTFI).

The protein belongs to the villin/gelsolin family.

The protein resides in the cytoplasm. It is found in the cytoskeleton. Calcium-regulated, actin-modulating protein that binds to the plus (or barbed) ends of actin monomers or filaments, preventing monomer exchange (end-blocking or capping). It can promote the assembly of monomers into filaments (nucleation) as well as sever filaments already formed. Plays a role in ciliogenesis. The protein is Gelsolin (gsn) of Xenopus laevis (African clawed frog).